The primary structure comprises 244 residues: Thiol S-methyltransferase TMT1B (244 aa).

The signal sequence occupies residues 1-23 (MDALVLFLQLLVLLLTLPLHLLA).

Belongs to the methyltransferase superfamily.

The protein localises to the endoplasmic reticulum membrane. Its subcellular location is the lipid droplet. It localises to the microsome. The protein resides in the cytoplasm. It is found in the cytosol. It catalyses the reaction a thiol + S-adenosyl-L-methionine = a methyl thioether + S-adenosyl-L-homocysteine + H(+). Thiol S-methyltransferase that catalyzes the transfer of a methyl group from S-adenosyl-L-methionine to alkyl and phenolic thiol-containing acceptor substrates. Together with TMT1B accounts for most of S-thiol methylation activity in the endoplasmic reticulum of hepatocytes. Selectively methylates S-centered nucleophiles from metabolites such as hydrogen sulfide and dithiothreitol. In Mus musculus (Mouse), this protein is Thiol S-methyltransferase TMT1B.